The following is a 197-amino-acid chain: Ribose 1,5-bisphosphate phosphokinase PhnN (197 aa).

21 to 28 (GPSGAGKD) contacts ATP.

This sequence belongs to the ribose 1,5-bisphosphokinase family.

The enzyme catalyses alpha-D-ribose 1,5-bisphosphate + ATP = 5-phospho-alpha-D-ribose 1-diphosphate + ADP. It functions in the pathway metabolic intermediate biosynthesis; 5-phospho-alpha-D-ribose 1-diphosphate biosynthesis; 5-phospho-alpha-D-ribose 1-diphosphate from D-ribose 5-phosphate (route II): step 3/3. In terms of biological role, catalyzes the phosphorylation of ribose 1,5-bisphosphate to 5-phospho-D-ribosyl alpha-1-diphosphate (PRPP). The chain is Ribose 1,5-bisphosphate phosphokinase PhnN from Rhizobium etli (strain CIAT 652).